A 201-amino-acid polypeptide reads, in one-letter code: UPF0637 protein LSEI_1198 (201 aa).

This sequence belongs to the UPF0637 family.

The protein is UPF0637 protein LSEI_1198 of Lacticaseibacillus paracasei (strain ATCC 334 / BCRC 17002 / CCUG 31169 / CIP 107868 / KCTC 3260 / NRRL B-441) (Lactobacillus paracasei).